Consider the following 803-residue polypeptide: Translation initiation factor IF-2 (803 aa).

2 disordered regions span residues proline 95–glutamate 125 and glutamate 138–glutamine 209. The span at valine 111 to asparagine 121 shows a compositional bias: polar residues. Basic and acidic residues predominate over residues glutamate 138 to lysine 155. Positions lysine 156 to lysine 167 are enriched in basic residues. The segment covering proline 168–arginine 188 has biased composition (basic and acidic residues). The 170-residue stretch at proline 302–lysine 471 folds into the tr-type G domain. Residues glycine 311–threonine 318 form a G1 region. Glycine 311–threonine 318 provides a ligand contact to GTP. A G2 region spans residues glycine 336 to histidine 340. The G3 stretch occupies residues aspartate 357–glycine 360. Residues aspartate 357 to histidine 361 and asparagine 411 to aspartate 414 contribute to the GTP site. The interval asparagine 411–aspartate 414 is G4. The segment at serine 447–lysine 449 is G5.

It belongs to the TRAFAC class translation factor GTPase superfamily. Classic translation factor GTPase family. IF-2 subfamily.

It localises to the cytoplasm. One of the essential components for the initiation of protein synthesis. Protects formylmethionyl-tRNA from spontaneous hydrolysis and promotes its binding to the 30S ribosomal subunits. Also involved in the hydrolysis of GTP during the formation of the 70S ribosomal complex. The polypeptide is Translation initiation factor IF-2 (Coxiella burnetii (strain CbuG_Q212) (Coxiella burnetii (strain Q212))).